The primary structure comprises 279 residues: Small ribosomal subunit protein uS2 (279 aa).

Composition is skewed to acidic residues over residues 1-18 (MTEN…DEAV), 28-42 (TATE…DESN), and 65-81 (ADAE…FDED). The tract at residues 1–81 (MTENDNEVVE…ELEGPTFDED (81 aa)) is disordered.

Belongs to the universal ribosomal protein uS2 family.

The protein is Small ribosomal subunit protein uS2 of Haloquadratum walsbyi (strain DSM 16790 / HBSQ001).